A 488-amino-acid chain; its full sequence is Glutamyl-tRNA(Gln) amidotransferase subunit A (488 aa).

Residues lysine 77 and serine 152 each act as charge relay system in the active site. Serine 176 acts as the Acyl-ester intermediate in catalysis.

Belongs to the amidase family. GatA subfamily. Heterotrimer of A, B and C subunits.

The catalysed reaction is L-glutamyl-tRNA(Gln) + L-glutamine + ATP + H2O = L-glutaminyl-tRNA(Gln) + L-glutamate + ADP + phosphate + H(+). Allows the formation of correctly charged Gln-tRNA(Gln) through the transamidation of misacylated Glu-tRNA(Gln) in organisms which lack glutaminyl-tRNA synthetase. The reaction takes place in the presence of glutamine and ATP through an activated gamma-phospho-Glu-tRNA(Gln). In Streptococcus equi subsp. zooepidemicus (strain H70), this protein is Glutamyl-tRNA(Gln) amidotransferase subunit A.